Here is a 579-residue protein sequence, read N- to C-terminus: YTH domain-containing family protein 2 (579 aa).

The tract at residues 1-45 (MSASSLLEQRPKGQGNKVQNGSVHQKDGLNDDDFEPYLSPQARPN) is disordered. Residue Ser-2 is modified to N-acetylserine. Residues Ser-2, Ser-4, Ser-5, Ser-22, Ser-39, and Ser-196 each carry the phosphoserine modification. Positions 2–384 (SASSLLEQRP…QAGSGSTPSE (383 aa)) are localization to mRNA processing bodies (P-bodies). The disordered stretch occupies residues 247–387 (AKQQPKLKTK…SGSTPSEPHP (141 aa)). The span at 291 to 316 (ALVQNIGQPTQGSPQPVGQQANNSPP) shows a compositional bias: polar residues. The segment covering 337–349 (AQLSVQQQAAQPT) has biased composition (low complexity). Ser-359 is modified (phosphoserine). Gly residues predominate over residues 359 to 371 (SGFGHNGVDGNGV). The span at 372–383 (GQSQAGSGSTPS) shows a compositional bias: polar residues. Positions 385–579 (PHPVLEKLRS…VKKERQGRGK (195 aa)) are interaction with m6A-containing mRNAs. Ser-394 carries the post-translational modification Phosphoserine. In terms of domain architecture, YTH spans 410–544 (GRVFIIKSYS…EKAKQVLKII (135 aa)). RNA contacts are provided by residues 416-418 (KSY), Asp-422, 432-433 (WC), Asn-462, Trp-486, and Trp-491.

The protein belongs to the YTHDF family. YTHDF2 subfamily. In terms of assembly, interacts with CNOT1; interaction is direct and promotes recruitment of the CCR4-NOT complex. Interacts with YTHDF3. Interacts with RIDA/HRSP12; interaction leads to recruitment of the ribonuclease P/MRP complex. Ubiquitinated by the SCF(SKP2) complex, leading to its degradation. In terms of tissue distribution, widely expressed, with highest expression in testis.

It localises to the cytoplasm. The protein resides in the cytosol. It is found in the P-body. Its subcellular location is the stress granule. The protein localises to the nucleus. Functionally, specifically recognizes and binds N6-methyladenosine (m6A)-containing RNAs, and regulates their stability. M6A is a modification present at internal sites of mRNAs and some non-coding RNAs and plays a role in mRNA stability and processing. Acts as a regulator of mRNA stability by promoting degradation of m6A-containing mRNAs via interaction with the CCR4-NOT and ribonuclease P/MRP complexes, depending on the context. The YTHDF paralogs (YTHDF1, YTHDF2 and YTHDF3) share m6A-containing mRNAs targets and act redundantly to mediate mRNA degradation and cellular differentiation. M6A-containing mRNAs containing a binding site for RIDA/HRSP12 (5'-GGUUC-3') are preferentially degraded by endoribonucleolytic cleavage: cooperative binding of RIDA/HRSP12 and YTHDF2 to transcripts leads to recruitment of the ribonuclease P/MRP complex. Other m6A-containing mRNAs undergo deadenylation via direct interaction between YTHDF2 and CNOT1, leading to recruitment of the CCR4-NOT and subsequent deadenylation of m6A-containing mRNAs. Required maternally to regulate oocyte maturation: probably acts by binding to m6A-containing mRNAs, thereby regulating maternal transcript dosage during oocyte maturation, which is essential for the competence of oocytes to sustain early zygotic development. Also required during spermatogenesis: regulates spermagonial adhesion by promoting degradation of m6A-containing transcripts coding for matrix metallopeptidases. Also involved in hematopoietic stem cells specification by binding to m6A-containing mRNAs, leading to promote their degradation. Also acts as a regulator of neural development by promoting m6A-dependent degradation of neural development-related mRNA targets. Inhibits neural specification of induced pluripotent stem cells by binding to methylated neural-specific mRNAs and promoting their degradation, thereby restraining neural differentiation. Regulates circadian regulation of hepatic lipid metabolism: acts by promoting m6A-dependent degradation of PPARA transcripts. Regulates the innate immune response to infection by inhibiting the type I interferon response: acts by binding to m6A-containing IFNB transcripts and promoting their degradation. May also act as a promoter of cap-independent mRNA translation following heat shock stress: upon stress, relocalizes to the nucleus and specifically binds mRNAs with some m6A methylation mark at their 5'-UTR, protecting demethylation of mRNAs by FTO, thereby promoting cap-independent mRNA translation. Regulates mitotic entry by promoting the phase-specific m6A-dependent degradation of WEE1 transcripts. Promotes formation of phase-separated membraneless compartments, such as P-bodies or stress granules, by undergoing liquid-liquid phase separation upon binding to mRNAs containing multiple m6A-modified residues: polymethylated mRNAs act as a multivalent scaffold for the binding of YTHDF proteins, juxtaposing their disordered regions and thereby leading to phase separation. The resulting mRNA-YTHDF complexes then partition into different endogenous phase-separated membraneless compartments, such as P-bodies, stress granules or neuronal RNA granules. May also recognize and bind RNAs modified by C5-methylcytosine (m5C) and act as a regulator of rRNA processing. The polypeptide is YTH domain-containing family protein 2 (Mus musculus (Mouse)).